The chain runs to 461 residues: Phosphoglucosamine mutase (461 aa).

S107 functions as the Phosphoserine intermediate in the catalytic mechanism. The Mg(2+) site is built by S107, D254, D256, and D258. S107 carries the phosphoserine modification.

The protein belongs to the phosphohexose mutase family. Mg(2+) serves as cofactor. Activated by phosphorylation.

It catalyses the reaction alpha-D-glucosamine 1-phosphate = D-glucosamine 6-phosphate. Its function is as follows. Catalyzes the conversion of glucosamine-6-phosphate to glucosamine-1-phosphate. The chain is Phosphoglucosamine mutase from Bifidobacterium longum (strain DJO10A).